A 333-amino-acid polypeptide reads, in one-letter code: T-cell surface glycoprotein CD1b-1 (333 aa).

A signal peptide spans methionine 1–asparagine 18. The Extracellular segment spans residues glutamate 19 to glycine 302. N-linked (GlcNAc...) asparagine glycans are attached at residues asparagine 38, asparagine 75, asparagine 146, and asparagine 258. 2 disulfides stabilise this stretch: cysteine 120-cysteine 184 and cysteine 224-cysteine 279. Positions proline 185–tryptophan 295 constitute an Ig-like domain. The chain crosses the membrane as a helical span at residues leucine 303 to phenylalanine 323. The Cytoplasmic segment spans residues tryptophan 324–leucine 333. Residues tyrosine 329–isoleucine 332 carry the Internalization signal motif.

In terms of assembly, heterodimer with B2M (beta-2-microglobulin). Interacts with saposin C.

The protein localises to the cell membrane. The protein resides in the endosome membrane. It is found in the lysosome membrane. Its function is as follows. Antigen-presenting protein that binds self and non-self lipid and glycolipid antigens and presents them to T-cell receptors on natural killer T-cells. This is T-cell surface glycoprotein CD1b-1 from Ovis aries (Sheep).